The following is a 176-amino-acid chain: MALWRAYQRALTAHPWKVQVLTAGSLMGLGDVISQQLVERRGLQAHQAGRTLTMASLGCGFVGPVVGGWYRVLDRLIPGTTKVDALKKMLLDQGGFAPCFLGCFLPLVGTLNGLSAQDNWAKLQRDFPDALITNYYLWPAVQLANFYLVPLHYRLAVVQCVAVIWNSYLSWKAHRL.

4 consecutive transmembrane segments (helical) span residues V18–V38, T53–L73, G94–L114, and L131–L151.

Belongs to the peroxisomal membrane protein PXMP2/4 family.

It is found in the mitochondrion inner membrane. Non-selective channel that modulates the membrane potential under normal conditions and oxidative stress, and is involved in mitochondrial homeostasis. Involved in mitochondrial deoxynucleoside triphosphates (dNTP) pool homeostasis and mitochondrial DNA (mtDNA) maintenance. May be involved in the regulation of reactive oxygen species metabolism and the control of oxidative phosphorylation. This chain is Mitochondrial inner membrane protein Mpv17, found in Bos taurus (Bovine).